Reading from the N-terminus, the 266-residue chain is L-aspartate dehydrogenase (266 aa).

The NAD(+) site is built by Ala123 and Asn189. Residue His219 is part of the active site.

This sequence belongs to the L-aspartate dehydrogenase family.

It catalyses the reaction L-aspartate + NADP(+) + H2O = oxaloacetate + NH4(+) + NADPH + H(+). The catalysed reaction is L-aspartate + NAD(+) + H2O = oxaloacetate + NH4(+) + NADH + H(+). It participates in cofactor biosynthesis; NAD(+) biosynthesis; iminoaspartate from L-aspartate (dehydrogenase route): step 1/1. Its function is as follows. Specifically catalyzes the NAD or NADP-dependent dehydrogenation of L-aspartate to iminoaspartate. This Cupriavidus necator (strain ATCC 17699 / DSM 428 / KCTC 22496 / NCIMB 10442 / H16 / Stanier 337) (Ralstonia eutropha) protein is L-aspartate dehydrogenase.